The chain runs to 326 residues: Glutaminase 2 (326 aa).

The substrate site is built by serine 73, asparagine 125, glutamate 169, asparagine 176, tyrosine 200, tyrosine 252, and valine 270.

The protein belongs to the glutaminase family. As to quaternary structure, homotetramer.

The catalysed reaction is L-glutamine + H2O = L-glutamate + NH4(+). The protein is Glutaminase 2 of Bacillus cereus (strain ATCC 14579 / DSM 31 / CCUG 7414 / JCM 2152 / NBRC 15305 / NCIMB 9373 / NCTC 2599 / NRRL B-3711).